We begin with the raw amino-acid sequence, 297 residues long: Glutamyl-Q tRNA(Asp) synthetase (297 aa).

L-glutamate contacts are provided by residues Arg7–Ser11 and Glu43. Residues Pro10–Ser20 carry the 'HIGH' region motif. Residues Cys99, Cys101, Tyr122, and Cys126 each coordinate Zn(2+). L-glutamate-binding residues include Tyr182 and Arg200. Positions Lys238–Gln242 match the 'KMSKS' region motif. Lys241 is an ATP binding site.

Belongs to the class-I aminoacyl-tRNA synthetase family. GluQ subfamily. It depends on Zn(2+) as a cofactor.

In terms of biological role, catalyzes the tRNA-independent activation of glutamate in presence of ATP and the subsequent transfer of glutamate onto a tRNA(Asp). Glutamate is transferred on the 2-amino-5-(4,5-dihydroxy-2-cyclopenten-1-yl) moiety of the queuosine in the wobble position of the QUC anticodon. The polypeptide is Glutamyl-Q tRNA(Asp) synthetase (Burkholderia pseudomallei (strain K96243)).